We begin with the raw amino-acid sequence, 123 residues long: Small ribosomal subunit protein uS12 (123 aa).

A disordered region spans residues 1–28; it reads MPTIQQLIRKPRQPKVKRSKSQHLESCP. A compositionally biased stretch (basic residues) spans 9-21; sequence RKPRQPKVKRSKS. Asp-89 is modified (3-methylthioaspartic acid).

The protein belongs to the universal ribosomal protein uS12 family. As to quaternary structure, part of the 30S ribosomal subunit. Contacts proteins S8 and S17. May interact with IF1 in the 30S initiation complex.

Its function is as follows. With S4 and S5 plays an important role in translational accuracy. In terms of biological role, interacts with and stabilizes bases of the 16S rRNA that are involved in tRNA selection in the A site and with the mRNA backbone. Located at the interface of the 30S and 50S subunits, it traverses the body of the 30S subunit contacting proteins on the other side and probably holding the rRNA structure together. The combined cluster of proteins S8, S12 and S17 appears to hold together the shoulder and platform of the 30S subunit. The protein is Small ribosomal subunit protein uS12 of Dinoroseobacter shibae (strain DSM 16493 / NCIMB 14021 / DFL 12).